Consider the following 683-residue polypeptide: Protein kinase C eta type (683 aa).

The C2 domain occupies 1–118 (MSSGTMKFNG…LRTTGASDTF (118 aa)). Residues Ser-28 and Ser-32 each carry the phosphoserine; by autocatalysis modification. Phorbol-ester/DAG-type zinc fingers lie at residues 171-222 (GHKF…VTAC) and 245-295 (PHKF…APNC). A Phosphoserine modification is found at Ser-317. The segment at 320–342 (SKLVSRSTLRRQGKESSKEGNGI) is disordered. One can recognise a Protein kinase domain in the interval 355 to 614 (FEFIRVLGKG…EHAILRHPFF (260 aa)). ATP-binding positions include 361-369 (LGKGSFGKV) and Lys-384. The active-site Proton acceptor is Asp-479. Thr-513 bears the Phosphothreonine; by PDPK1 mark. Positions 615–683 (KEIDWAQLNH…FSYVSPELQP (69 aa)) constitute an AGC-kinase C-terminal domain. At Thr-656 the chain carries Phosphothreonine. Position 675 is a phosphoserine (Ser-675).

It belongs to the protein kinase superfamily. AGC Ser/Thr protein kinase family. PKC subfamily. In terms of assembly, interacts with FYN. Interacts with RALA. Interacts with DGKQ. Interacts with PRKCH upstream open reading frame 2; the interaction leads to inhibition of kinase activity. Most abundant in lung, less in heart and skin.

The protein resides in the cytoplasm. The catalysed reaction is L-seryl-[protein] + ATP = O-phospho-L-seryl-[protein] + ADP + H(+). It catalyses the reaction L-threonyl-[protein] + ATP = O-phospho-L-threonyl-[protein] + ADP + H(+). Its activity is regulated as follows. Novel PKCs (PRKCD, PRKCE, PRKCH and PRKCQ) are calcium-insensitive, but activated by diacylglycerol (DAG) and phosphatidylserine. Three specific sites; Thr-513 (activation loop of the kinase domain), Thr-656 (turn motif) and Ser-675 (hydrophobic region), need to be phosphorylated for its full activation. Inhibited by PRKCH upstream open reading frame 2. Its function is as follows. Calcium-independent, phospholipid- and diacylglycerol (DAG)-dependent serine/threonine-protein kinase that is involved in the regulation of cell differentiation in keratinocytes and pre-B cell receptor, mediates regulation of epithelial tight junction integrity and foam cell formation, and is required for glioblastoma proliferation and apoptosis prevention in MCF-7 cells. In keratinocytes, binds and activates the tyrosine kinase FYN, which in turn blocks epidermal growth factor receptor (EGFR) signaling and leads to keratinocyte growth arrest and differentiation. Associates with the cyclin CCNE1-CDK2-CDKN1B complex and inhibits CDK2 kinase activity, leading to RB1 dephosphorylation and thereby G1 arrest in keratinocytes. In association with RALA activates actin depolymerization, which is necessary for keratinocyte differentiation. In the pre-B cell receptor signaling, functions downstream of BLNK by up-regulating IRF4, which in turn activates L chain gene rearrangement. Regulates epithelial tight junctions (TJs) by phosphorylating occludin (OCLN) on threonine residues, which is necessary for the assembly and maintenance of TJs. In association with PLD2 and via TLR4 signaling, is involved in lipopolysaccharide (LPS)-induced RGS2 down-regulation and foam cell formation. Upon PMA stimulation, mediates glioblastoma cell proliferation by activating the mTOR pathway, the PI3K/AKT pathway and the ERK1-dependent phosphorylation of ELK1. Involved in the protection of glioblastoma cells from irradiation-induced apoptosis by preventing caspase-9 activation. In camptothecin-treated MCF-7 cells, regulates NF-kappa-B upstream signaling by activating IKBKB, and confers protection against DNA damage-induced apoptosis. Promotes oncogenic functions of ATF2 in the nucleus while blocking its apoptotic function at mitochondria. Phosphorylates ATF2 which promotes its nuclear retention and transcriptional activity and negatively regulates its mitochondrial localization. This Homo sapiens (Human) protein is Protein kinase C eta type (PRKCH).